Reading from the N-terminus, the 85-residue chain is Putative RING finger protein 095L (85 aa).

An RING-type; degenerate zinc finger spans residues 39–73 (CPIWYNYQVNTVFLPCAHVACYLCSKIIKNCHLCR).

The protein is Putative RING finger protein 095L of Invertebrate iridescent virus 6 (IIV-6).